A 176-amino-acid polypeptide reads, in one-letter code: uncharacterized protein (176 aa).

The N-terminal stretch at 1 to 20 (MIKKISIILITLFIIQLTKS) is a signal peptide. The segment at 26–46 (NNNNNNNNNNNNNNNNNNNNN) is disordered. Asn120 carries an N-linked (GlcNAc...) asparagine glycan.

The protein belongs to the Dictyostelium gerABC family.

It is found in the secreted. This is an uncharacterized protein from Dictyostelium discoideum (Social amoeba).